A 693-amino-acid polypeptide reads, in one-letter code: Elongation factor G (693 aa).

Positions 9 to 283 (ERVRNIGIIA…AVCDYLPSPV (275 aa)) constitute a tr-type G domain. Residues 18-25 (AHIDAGKT), 82-86 (DTPGH), and 136-139 (NKMD) contribute to the GTP site.

It belongs to the TRAFAC class translation factor GTPase superfamily. Classic translation factor GTPase family. EF-G/EF-2 subfamily.

Its subcellular location is the cytoplasm. Its function is as follows. Catalyzes the GTP-dependent ribosomal translocation step during translation elongation. During this step, the ribosome changes from the pre-translocational (PRE) to the post-translocational (POST) state as the newly formed A-site-bound peptidyl-tRNA and P-site-bound deacylated tRNA move to the P and E sites, respectively. Catalyzes the coordinated movement of the two tRNA molecules, the mRNA and conformational changes in the ribosome. This is Elongation factor G from Dehalococcoides mccartyi (strain ATCC BAA-2266 / KCTC 15142 / 195) (Dehalococcoides ethenogenes (strain 195)).